We begin with the raw amino-acid sequence, 254 residues long: 3-deoxy-manno-octulosonate cytidylyltransferase (254 aa).

Belongs to the KdsB family.

The protein resides in the cytoplasm. It catalyses the reaction 3-deoxy-alpha-D-manno-oct-2-ulosonate + CTP = CMP-3-deoxy-beta-D-manno-octulosonate + diphosphate. It functions in the pathway nucleotide-sugar biosynthesis; CMP-3-deoxy-D-manno-octulosonate biosynthesis; CMP-3-deoxy-D-manno-octulosonate from 3-deoxy-D-manno-octulosonate and CTP: step 1/1. Its pathway is bacterial outer membrane biogenesis; lipopolysaccharide biosynthesis. Its function is as follows. Activates KDO (a required 8-carbon sugar) for incorporation into bacterial lipopolysaccharide in Gram-negative bacteria. The protein is 3-deoxy-manno-octulosonate cytidylyltransferase of Pseudomonas aeruginosa (strain LESB58).